A 75-amino-acid chain; its full sequence is Small ribosomal subunit protein bS16 (75 aa).

This sequence belongs to the bacterial ribosomal protein bS16 family.

The chain is Small ribosomal subunit protein bS16 from Campylobacter jejuni subsp. jejuni serotype O:23/36 (strain 81-176).